The chain runs to 628 residues: tRNA uridine 5-carboxymethylaminomethyl modification enzyme MnmG (628 aa).

An FAD-binding site is contributed by glycine 14–glycine 19. An NAD(+)-binding site is contributed by glycine 274–phenylalanine 288.

Belongs to the MnmG family. As to quaternary structure, homodimer. Heterotetramer of two MnmE and two MnmG subunits. It depends on FAD as a cofactor.

The protein localises to the cytoplasm. Its function is as follows. NAD-binding protein involved in the addition of a carboxymethylaminomethyl (cmnm) group at the wobble position (U34) of certain tRNAs, forming tRNA-cmnm(5)s(2)U34. This is tRNA uridine 5-carboxymethylaminomethyl modification enzyme MnmG from Clostridium kluyveri (strain ATCC 8527 / DSM 555 / NBRC 12016 / NCIMB 10680 / K1).